The following is a 287-amino-acid chain: Thymidylate synthase (287 aa).

Arginine 21 provides a ligand contact to dUMP. Histidine 51 provides a ligand contact to (6R)-5,10-methylene-5,6,7,8-tetrahydrofolate. 150–151 (RR) provides a ligand contact to dUMP. The active-site Nucleophile is the cysteine 170. Residues 190 to 193 (RSGD), asparagine 201, and 231 to 233 (HIY) each bind dUMP. Aspartate 193 lines the (6R)-5,10-methylene-5,6,7,8-tetrahydrofolate pocket. Residue alanine 286 participates in (6R)-5,10-methylene-5,6,7,8-tetrahydrofolate binding.

It belongs to the thymidylate synthase family. Bacterial-type ThyA subfamily. Homodimer.

The protein localises to the cytoplasm. The enzyme catalyses dUMP + (6R)-5,10-methylene-5,6,7,8-tetrahydrofolate = 7,8-dihydrofolate + dTMP. It participates in pyrimidine metabolism; dTTP biosynthesis. Functionally, catalyzes the reductive methylation of 2'-deoxyuridine-5'-monophosphate (dUMP) to 2'-deoxythymidine-5'-monophosphate (dTMP) while utilizing 5,10-methylenetetrahydrofolate (mTHF) as the methyl donor and reductant in the reaction, yielding dihydrofolate (DHF) as a by-product. This enzymatic reaction provides an intracellular de novo source of dTMP, an essential precursor for DNA biosynthesis. The polypeptide is Thymidylate synthase (Mycoplasma pneumoniae (strain ATCC 29342 / M129 / Subtype 1) (Mycoplasmoides pneumoniae)).